The chain runs to 144 residues: 3-dehydroquinate dehydratase (144 aa).

The active-site Proton acceptor is the Tyr-22. Residues Asn-73, His-79, and Asp-86 each contribute to the substrate site. Residue His-99 is the Proton donor of the active site. Residues Leu-100–Ser-101 and Arg-110 each bind substrate.

Belongs to the type-II 3-dehydroquinase family. As to quaternary structure, homododecamer.

It catalyses the reaction 3-dehydroquinate = 3-dehydroshikimate + H2O. It functions in the pathway metabolic intermediate biosynthesis; chorismate biosynthesis; chorismate from D-erythrose 4-phosphate and phosphoenolpyruvate: step 3/7. Catalyzes a trans-dehydration via an enolate intermediate. This is 3-dehydroquinate dehydratase from Geotalea daltonii (strain DSM 22248 / JCM 15807 / FRC-32) (Geobacter daltonii).